The sequence spans 190 residues: MEVILLERVAKLGQMGETVNVRPGYARNFLLARGKALRATENNKKHFEAQRAQLEARNLERRNEAQTVAEKLDGQSFVLIRQSGETGVLYGSVSTRDLAEVVTKEGFSVERGQFVLNQPIKTLGLHTVPVTLHPEVEVKVTVNIARSPEEAERQARGESVTEREQFNLDDLGLEVGQALADAGEGADDRG.

This sequence belongs to the bacterial ribosomal protein bL9 family.

Functionally, binds to the 23S rRNA. This is Large ribosomal subunit protein bL9 from Methylorubrum extorquens (strain CM4 / NCIMB 13688) (Methylobacterium extorquens).